The following is a 47-amino-acid chain: Protein PsbN (47 aa).

Residues 9–31 (YSLLIAMVTITFGLTGYGLYTAF) form a helical membrane-spanning segment.

This sequence belongs to the PsbN family.

The protein resides in the cellular thylakoid membrane. Its function is as follows. May play a role in photosystem I and II biogenesis. This Prochlorococcus marinus (strain MIT 9303) protein is Protein PsbN.